A 129-amino-acid chain; its full sequence is Small ribosomal subunit protein uS11 (129 aa).

It belongs to the universal ribosomal protein uS11 family. Part of the 30S ribosomal subunit. Interacts with proteins S7 and S18. Binds to IF-3.

Its function is as follows. Located on the platform of the 30S subunit, it bridges several disparate RNA helices of the 16S rRNA. Forms part of the Shine-Dalgarno cleft in the 70S ribosome. The chain is Small ribosomal subunit protein uS11 from Nitrosomonas europaea (strain ATCC 19718 / CIP 103999 / KCTC 2705 / NBRC 14298).